The sequence spans 396 residues: NAD(P)H oxidoreductase RTN4IP1, mitochondrial (396 aa).

The transit peptide at 1-40 (MGFLKTCVFRRNACTAVCFWRSQVVQKPSVRKISTTSPRS) directs the protein to the mitochondrion. In terms of domain architecture, Enoyl reductase (ER) spans 52–393 (GSNEVLRFTQ…RGHARGKTVI (342 aa)). NADPH contacts are provided by S214, G216, V217, S237, Y255, N276, L300, A341, F343, H386, A387, and R388.

The protein belongs to the zinc-containing alcohol dehydrogenase family. Quinone oxidoreductase subfamily. Interacts with RTN4, UQCRC1 and UQCRC2.

The protein resides in the mitochondrion matrix. Its subcellular location is the mitochondrion outer membrane. The catalysed reaction is a 3-demethylubiquinone + NADH + 2 H(+) = a 3-demethylubiquinol + NAD(+). It carries out the reaction a 3-demethylubiquinone + NADPH + 2 H(+) = a 3-demethylubiquinol + NADP(+). The enzyme catalyses 3-demethylubiquinone-10 + NADH + 2 H(+) = 3-demethylubiquinol-10 + NAD(+). It catalyses the reaction 3-demethylubiquinone-10 + NADPH + 2 H(+) = 3-demethylubiquinol-10 + NADP(+). The protein operates within cofactor biosynthesis; ubiquinone biosynthesis. In terms of biological role, NAD(P)H oxidoreductase involved in the ubiquinone biosynthetic pathway. Required for the O-methyltransferase activity of COQ3. Able to catalyze the oxidoreduction of 3-demethylubiquinone into 3-demethylubiquinol in vitro. However, it is unclear if 3-demethylubiquinone constitutes a substrate in vivo. May also play a role in the regulation of retinal ganglion cell (RGC) neurite outgrowth, and hence in the development of the inner retina and optic nerve. Appears to be a potent inhibitor of regeneration following spinal cord injury. This chain is NAD(P)H oxidoreductase RTN4IP1, mitochondrial (RTN4IP1), found in Bos taurus (Bovine).